Consider the following 631-residue polypeptide: Pro-interleukin-16 (631 aa).

2 disordered regions span residues 30–269 (ENPG…FPLT) and 317–344 (PKEGASPTSSSNEDSAANGSAETSASDT). Positions 132–144 (SSSSSSIKQRISS) are enriched in low complexity. Residue Ser-221 is modified to Phosphoserine. The segment covering 322 to 344 (SPTSSSNEDSAANGSAETSASDT) has biased composition (polar residues). An interaction with PPP1R12A, PPP1R12B and PPP1R12C region spans residues 405-501 (KQLDSIHVTI…IVTRKLTAES (97 aa)). 2 consecutive PDZ domains span residues 411 to 496 (HVTI…VTRK) and 533 to 618 (TVTL…IRRK).

In terms of assembly, homotetramer. Pro-interleukin-16 interacts (via PDZ 2 domain) with PPP1R12A, PPP1R12B and PPP1R12C. Pro-interleukin-16 interacts with GRIN2A. Pro-interleukin-16 interacts with GABPB1. Pro-interleukin-16 interacts (via PDZ 3 domain) with HDAC3.

The protein resides in the secreted. Its subcellular location is the cytoplasm. It localises to the nucleus. Its function is as follows. Interleukin-16 stimulates a migratory response in CD4+ lymphocytes, monocytes, and eosinophils. Primes CD4+ T-cells for IL-2 and IL-15 responsiveness. Also induces T-lymphocyte expression of interleukin 2 receptor. Ligand for CD4. Pro-interleukin-16 is involved in cell cycle progression in T-cells. Appears to be involved in transcriptional regulation of SKP2 and is probably part of a transcriptional repression complex on the core promoter of the SKP2 gene. May act as a scaffold for GABPB1 (the DNA-binding subunit the GABP transcription factor complex) and HDAC3 thus maintaining transcriptional repression and blocking cell cycle progression in resting T-cells. The chain is Pro-interleukin-16 (IL16) from Chlorocebus aethiops (Green monkey).